Consider the following 262-residue polypeptide: MHVNEMRPDEVRALIRKGEITGPTAGMAGGFTQANLVILKKELAFEFLLFCQRNQKPCPILDVTDPGSPVPSITAPDADIRTDFPKYRVYKRGELADEVTDISSLWEDDMVGFLIGCSFTFEQALMNNGIPVRHIEEKRNVPMYQTNIPCVPAGRFQGPMVVSMRPVPEEQAVRAVQVTSRLPAVHGGPVHIGSPEAIGITDIAKPDFGDAVTIKKGEVPVFWACGVTPQAVAMHARPELMITHSPGHMLVTDVRDEQFGVL.

The protein belongs to the D-glutamate cyclase family.

This chain is Putative hydro-lyase BLi00500/BL02808, found in Bacillus licheniformis (strain ATCC 14580 / DSM 13 / JCM 2505 / CCUG 7422 / NBRC 12200 / NCIMB 9375 / NCTC 10341 / NRRL NRS-1264 / Gibson 46).